The chain runs to 412 residues: Tyrosine--tRNA ligase (412 aa).

Tyr-31 lines the L-tyrosine pocket. A 'HIGH' region motif is present at residues 36–45 (PTAASLHIGH). Tyr-162 and Gln-166 together coordinate L-tyrosine. The 'KMSKS' region motif lies at 222 to 226 (KIGKT). Lys-225 lines the ATP pocket. The S4 RNA-binding domain occupies 345–412 (KRWIDLFVGV…KKKKLVLHLI (68 aa)).

This sequence belongs to the class-I aminoacyl-tRNA synthetase family. TyrS type 1 subfamily. Homodimer.

It is found in the cytoplasm. It carries out the reaction tRNA(Tyr) + L-tyrosine + ATP = L-tyrosyl-tRNA(Tyr) + AMP + diphosphate + H(+). Functionally, catalyzes the attachment of tyrosine to tRNA(Tyr) in a two-step reaction: tyrosine is first activated by ATP to form Tyr-AMP and then transferred to the acceptor end of tRNA(Tyr). The chain is Tyrosine--tRNA ligase from Chlamydia caviae (strain ATCC VR-813 / DSM 19441 / 03DC25 / GPIC) (Chlamydophila caviae).